A 104-amino-acid polypeptide reads, in one-letter code: L-rhamnose mutarotase (104 aa).

Tyr-18 provides a ligand contact to substrate. Residue His-22 is the Proton donor of the active site. Residues Tyr-41 and 76–77 (WW) each bind substrate.

Belongs to the rhamnose mutarotase family. As to quaternary structure, homodimer.

The protein localises to the cytoplasm. It catalyses the reaction alpha-L-rhamnose = beta-L-rhamnose. It functions in the pathway carbohydrate metabolism; L-rhamnose metabolism. In terms of biological role, involved in the anomeric conversion of L-rhamnose. The chain is L-rhamnose mutarotase from Sinorhizobium fredii (strain NBRC 101917 / NGR234).